We begin with the raw amino-acid sequence, 326 residues long: Vacuolar protein sorting-associated protein 26A-A (326 aa).

Residues 306 to 326 (TNFHQRFEPQEPQASAEEPEI) form a disordered region. A compositionally biased stretch (low complexity) spans 315 to 326 (QEPQASAEEPEI).

This sequence belongs to the VPS26 family. As to quaternary structure, component of the heterotrimeric retromer cargo-selective complex (CSC) which is believed to associate with variable sorting nexins to form functionally distinct retromer complex variants.

The protein localises to the cytoplasm. Its subcellular location is the endosome membrane. It localises to the early endosome. In terms of biological role, acts as a component of the retromer cargo-selective complex (CSC). The CSC is believed to be the core functional component of retromer or respective retromer complex variants acting to prevent missorting of selected transmembrane cargo proteins into the lysosomal degradation pathway. Retromer mediates retrograde transport of cargo proteins from endosomes to the trans-Golgi network (TGN). The polypeptide is Vacuolar protein sorting-associated protein 26A-A (vps26a-a) (Xenopus laevis (African clawed frog)).